Consider the following 651-residue polypeptide: Translation factor GUF1 homolog, mitochondrial (651 aa).

A mitochondrion-targeting transit peptide spans 1–26; that stretch reads MAVTRAAAPMVGNCSSAMLIIGRRYF. In terms of domain architecture, tr-type G spans 51–228; it reads KKIRNFGIVA…AVVERLPPPK (178 aa). Residues 60-67, 121-125, and 175-178 contribute to the GTP site; these read AHVDHGKS, DTPGH, and NKVD.

The protein belongs to the TRAFAC class translation factor GTPase superfamily. Classic translation factor GTPase family. LepA subfamily.

It localises to the mitochondrion inner membrane. The catalysed reaction is GTP + H2O = GDP + phosphate + H(+). Functionally, promotes mitochondrial protein synthesis. May act as a fidelity factor of the translation reaction, by catalyzing a one-codon backward translocation of tRNAs on improperly translocated ribosomes. Binds to mitochondrial ribosomes in a GTP-dependent manner. The sequence is that of Translation factor GUF1 homolog, mitochondrial from Brugia malayi (Filarial nematode worm).